Consider the following 296-residue polypeptide: Acetyl-coenzyme A carboxylase carboxyl transferase subunit beta (296 aa).

The CoA carboxyltransferase N-terminal domain occupies 26-295 (VWTKCTNCEQ…PFKVGELIIE (270 aa)). Cysteine 30, cysteine 33, cysteine 49, and cysteine 52 together coordinate Zn(2+). A C4-type zinc finger spans residues 30–52 (CTNCEQVLYSEELKRNMQVCPKC).

The protein belongs to the AccD/PCCB family. Acetyl-CoA carboxylase is a heterohexamer composed of biotin carboxyl carrier protein (AccB), biotin carboxylase (AccC) and two subunits each of ACCase subunit alpha (AccA) and ACCase subunit beta (AccD). Zn(2+) serves as cofactor.

The protein resides in the cytoplasm. It carries out the reaction N(6)-carboxybiotinyl-L-lysyl-[protein] + acetyl-CoA = N(6)-biotinyl-L-lysyl-[protein] + malonyl-CoA. It participates in lipid metabolism; malonyl-CoA biosynthesis; malonyl-CoA from acetyl-CoA: step 1/1. Functionally, component of the acetyl coenzyme A carboxylase (ACC) complex. Biotin carboxylase (BC) catalyzes the carboxylation of biotin on its carrier protein (BCCP) and then the CO(2) group is transferred by the transcarboxylase to acetyl-CoA to form malonyl-CoA. The protein is Acetyl-coenzyme A carboxylase carboxyl transferase subunit beta of Haemophilus ducreyi (strain 35000HP / ATCC 700724).